The sequence spans 635 residues: Biosynthetic arginine decarboxylase (635 aa).

Lys-100 is subject to N6-(pyridoxal phosphate)lysine. Residue 282–292 coordinates substrate; sequence LDIGGGLGVDY.

It belongs to the Orn/Lys/Arg decarboxylase class-II family. SpeA subfamily. The cofactor is Mg(2+). Requires pyridoxal 5'-phosphate as cofactor.

The enzyme catalyses L-arginine + H(+) = agmatine + CO2. The protein operates within amine and polyamine biosynthesis; agmatine biosynthesis; agmatine from L-arginine: step 1/1. Catalyzes the biosynthesis of agmatine from arginine. The polypeptide is Biosynthetic arginine decarboxylase (Geotalea uraniireducens (strain Rf4) (Geobacter uraniireducens)).